The primary structure comprises 211 residues: Probable transcription repressor protein RGM1 (211 aa).

A Nuclear localization signal motif is present at residues 6–11; the sequence is PKRNKD. 2 consecutive C2H2-type zinc fingers follow at residues 19 to 44 and 50 to 73; these read YRCVGYPDCNMSFNRTEHLARHIRKH and FQCNICLKFFSRIDNLRQHQSSVH. The tract at residues 178-211 is disordered; sequence NIVELPPDSSDTPASPSKVQSFDQAKDASPNAKK. The segment covering 183–194 has biased composition (low complexity); the sequence is PPDSSDTPASPS.

The protein resides in the nucleus. The polypeptide is Probable transcription repressor protein RGM1 (RGM1) (Saccharomyces cerevisiae (strain ATCC 204508 / S288c) (Baker's yeast)).